Consider the following 244-residue polypeptide: tRNA (guanine-N(7)-)-methyltransferase (244 aa).

Positions 42, 67, 94, and 116 each coordinate S-adenosyl-L-methionine. D116 is an active-site residue. Residues K120, D150, and 191–194 each bind substrate; that span reads TYYE.

Belongs to the class I-like SAM-binding methyltransferase superfamily. TrmB family.

The catalysed reaction is guanosine(46) in tRNA + S-adenosyl-L-methionine = N(7)-methylguanosine(46) in tRNA + S-adenosyl-L-homocysteine. The protein operates within tRNA modification; N(7)-methylguanine-tRNA biosynthesis. Catalyzes the formation of N(7)-methylguanine at position 46 (m7G46) in tRNA. The polypeptide is tRNA (guanine-N(7)-)-methyltransferase (Porphyromonas gingivalis (strain ATCC BAA-308 / W83)).